Here is a 367-residue protein sequence, read N- to C-terminus: 2-aminoethylphosphonate--pyruvate transaminase (367 aa).

Residue K194 is modified to N6-(pyridoxal phosphate)lysine.

It belongs to the class-V pyridoxal-phosphate-dependent aminotransferase family. PhnW subfamily. In terms of assembly, homodimer. The cofactor is pyridoxal 5'-phosphate.

It catalyses the reaction (2-aminoethyl)phosphonate + pyruvate = phosphonoacetaldehyde + L-alanine. Functionally, involved in phosphonate degradation. In Salmonella gallinarum (strain 287/91 / NCTC 13346), this protein is 2-aminoethylphosphonate--pyruvate transaminase.